The sequence spans 113 residues: RING-box protein 2 (113 aa).

The disordered stretch occupies residues 1–26 (MADVEDGEETCALASHSGSSGSKSGG). Ala2 is modified (N-acetylalanine). Residue Thr10 is modified to Phosphothreonine; by CK2. Zn(2+)-binding residues include Cys50, Cys53, Cys61, Cys64, Cys73, Cys80, His82, His85, Cys87, Cys88, Cys99, and Cys102. An RING-type zinc finger spans residues 61–103 (CLRCQAENKQEDCVVVWGECNHSFHNCCMSLWVKQNNRCPLCQ).

The protein belongs to the RING-box family. Catalytic component of multiple cullin-5-RING E3 ubiquitin-protein ligase complexes (ECS complexes, also named CRL5 complexes) composed of CUL5, Elongin BC (ELOB and ELOC), RNF7/RBX2 and a variable SOCS box domain-containing protein as substrate-specific recognition component. Also interacts (with lower preference) with CUL1, CUL2, CUL3, CUL4A and CUL4B; additional evidence is however required to confirm this result in vivo. Interacts with UBE2F. Interacts with CSNK2B, the interaction is not affected by phosphorylation by CK2. May also interact with DCUN1D1, DCUN1D2, DCUN1D3, DCUN1D4 and DCUN1D5. As to quaternary structure, (Microbial infection) Following infection by HIV-1 virus, component of a cullin-5-RING E3 ubiquitin-protein ligase complex (ECS complex) hijacked by the HIV-1 Vif protein. In terms of processing, phosphorylation at Thr-10 by CK2 promotes its degradation by the proteasome. In terms of tissue distribution, expressed in heart, liver, skeletal muscle and pancreas. At very low levels expressed in brain, placenta and lung.

The protein resides in the cytoplasm. Its subcellular location is the nucleus. It carries out the reaction S-ubiquitinyl-[E2 ubiquitin-conjugating enzyme]-L-cysteine + [acceptor protein]-L-lysine = [E2 ubiquitin-conjugating enzyme]-L-cysteine + N(6)-ubiquitinyl-[acceptor protein]-L-lysine.. The enzyme catalyses S-[NEDD8-protein]-yl-[E2 NEDD8-conjugating enzyme]-L-cysteine + [cullin]-L-lysine = [E2 NEDD8-conjugating enzyme]-L-cysteine + N(6)-[NEDD8-protein]-yl-[cullin]-L-lysine.. Its pathway is protein modification; protein ubiquitination. It functions in the pathway protein modification; protein neddylation. Its function is as follows. Catalytic component of multiple cullin-5-RING E3 ubiquitin-protein ligase complexes (ECS complexes), which mediate the ubiquitination and subsequent proteasomal degradation of target proteins. It is thereby involved in various biological processes, such as cell cycle progression, signal transduction and transcription. The functional specificity of the E3 ubiquitin-protein ligase ECS complexes depend on the variable SOCS box-containing substrate recognition component. Within ECS complexes, RNF7/RBX2 recruits the E2 ubiquitination enzyme to the complex via its RING-type and brings it into close proximity to the substrate. Catalytic subunit of various SOCS-containing ECS complexes, such as the ECS(SOCS7) complex, that regulate reelin signaling by mediating ubiquitination and degradation of DAB1. The ECS(SOCS2) complex mediates the ubiquitination and subsequent proteasomal degradation of phosphorylated EPOR and GHR. Promotes ubiquitination and degradation of NF1, thereby regulating Ras protein signal transduction. As part of the ECS(ASB9) complex, catalyzes ubiquitination and degradation of CKB. The ECS(SPSB3) complex catalyzes ubiquitination of nuclear CGAS. As part of the ECS(RAB40C) complex, mediates ANKRD28 ubiquitination and degradation, thereby inhibiting protein phosphatase 6 (PP6) complex activity and focal adhesion assembly during cell migration. As part of some ECS complex, catalyzes 'Lys-11'-linked ubiquitination and degradation of BTRC. ECS complexes and ARIH2 collaborate in tandem to mediate ubiquitination of target proteins; ARIH2 mediating addition of the first ubiquitin on CRLs targets. Specifically catalyzes the neddylation of CUL5 via its interaction with UBE2F. Does not catalyze neddylation of other cullins (CUL1, CUL2, CUL3, CUL4A or CUL4B). May play a role in protecting cells from apoptosis induced by redox agents. Inactive. In terms of biological role, (Microbial infection) Following infection by HIV-1 virus, catalytic component of a cullin-5-RING E3 ubiquitin-protein ligase complex (ECS complex) hijacked by the HIV-1 Vif protein, which catalyzes ubiquitination and degradation of APOBEC3F and APOBEC3G. This Homo sapiens (Human) protein is RING-box protein 2.